A 581-amino-acid polypeptide reads, in one-letter code: Sulfate adenylyltransferase (581 aa).

The N-terminal stretch occupies residues methionine 1–phenylalanine 176. Residues aspartate 177–glutamine 401 are catalytic. Glutamine 204 serves as a coordination point for sulfate. ATP-binding positions include glutamine 204–asparagine 207 and glycine 298–histidine 301. Active-site residues include threonine 205, arginine 206, and asparagine 207. Arginine 206 lines the sulfate pocket. Position 302 (alanine 302) interacts with sulfate. Methionine 340 lines the ATP pocket. The segment at glutamine 402–valine 581 is allosteric regulation domain; adenylyl-sulfate kinase-like. 3'-phosphoadenylyl sulfate is bound by residues glutamate 441–arginine 444, threonine 486–alanine 487, and arginine 526.

This sequence in the N-terminal section; belongs to the sulfate adenylyltransferase family. In the C-terminal section; belongs to the APS kinase family. As to quaternary structure, homohexamer. Dimer of trimers.

It is found in the cytoplasm. It carries out the reaction sulfate + ATP + H(+) = adenosine 5'-phosphosulfate + diphosphate. It functions in the pathway sulfur metabolism; hydrogen sulfide biosynthesis; sulfite from sulfate: step 1/3. With respect to regulation, allosterically inhibited by 3'-phosphoadenosine 5'-phosphosulfate (PAPS). Functionally, catalyzes the first intracellular reaction of sulfate assimilation, forming adenosine-5'-phosphosulfate (APS) from inorganic sulfate and ATP. Plays an important role in sulfate activation as a component of the biosynthesis pathway of sulfur-containing amino acids. The chain is Sulfate adenylyltransferase from Cryptococcus neoformans var. grubii serotype A (strain H99 / ATCC 208821 / CBS 10515 / FGSC 9487) (Filobasidiella neoformans var. grubii).